The sequence spans 582 residues: Aspartate--tRNA(Asp/Asn) ligase (582 aa).

Glutamate 177 contributes to the L-aspartate binding site. The interval 201 to 204 (QLFK) is aspartate. Arginine 223 provides a ligand contact to L-aspartate. Residues 223 to 225 (RDE) and glutamine 232 contribute to the ATP site. Histidine 447 is a binding site for L-aspartate. Glutamate 481 serves as a coordination point for ATP. An L-aspartate-binding site is contributed by arginine 488. 533 to 536 (GLDR) is a binding site for ATP.

The protein belongs to the class-II aminoacyl-tRNA synthetase family. Type 1 subfamily. As to quaternary structure, homodimer.

It is found in the cytoplasm. The enzyme catalyses tRNA(Asx) + L-aspartate + ATP = L-aspartyl-tRNA(Asx) + AMP + diphosphate. Functionally, aspartyl-tRNA synthetase with relaxed tRNA specificity since it is able to aspartylate not only its cognate tRNA(Asp) but also tRNA(Asn). Reaction proceeds in two steps: L-aspartate is first activated by ATP to form Asp-AMP and then transferred to the acceptor end of tRNA(Asp/Asn). In Chlamydia trachomatis serovar L2 (strain ATCC VR-902B / DSM 19102 / 434/Bu), this protein is Aspartate--tRNA(Asp/Asn) ligase.